The sequence spans 484 residues: uncharacterized protein (484 aa).

The span at 1–14 shows a compositional bias: low complexity; it reads MIDSTSTATATSKT. The segment at 1 to 32 is disordered; it reads MIDSTSTATATSKTVELNTNGSKTDASSENGT. Residues 15-32 are compositionally biased toward polar residues; that stretch reads VELNTNGSKTDASSENGT. The residue at position 305 (K305) is an N6-(pyridoxal phosphate)lysine.

This sequence belongs to the class-III pyridoxal-phosphate-dependent aminotransferase family. The cofactor is pyridoxal 5'-phosphate.

This is an uncharacterized protein from Schizosaccharomyces pombe (strain 972 / ATCC 24843) (Fission yeast).